The primary structure comprises 1279 residues: Cellulose synthase operon protein C (1279 aa).

Residues 1–21 (MRRHTLAIAILAALASTASVA) form the signal peptide. TPR repeat units lie at residues 27–60 (QSLLIEQGYYWQSKKNPERALETWQKLLRLSPDQ), 62–94 (DALYGIGLIQVQQNHPAEAQKYLARLQALSPVP), 218–250 (ADETWRFALVWLGPPKPDQVSLFQQFLTVHPDD), 306–339 (VDALGGMGVLRQQQERYSEAENYLVQATRLPGGA), 384–417 (PGAAIALAGFQAQDNQFDDAEAGYRKVLARHPGD), 460–493 (ALRATQVGKLAEQRGDLKAAQAAYRQALDADPEN), 495–527 (WTRFALARMYLRDGQIRNARALIDGLLKSQPNQ), 606–639 (PERVAVLAAAYVEVGAAQYGLDMMQKVVENNPNP), 719–752 (ALGVGALARMYAASGNGKKAMELYAPLIQQNPNN), and 787–820 (PEILTSAARIYQGLGKNSEAAELLRKALAIENAM).

It participates in glycan metabolism; bacterial cellulose biosynthesis. Its function is as follows. Required for maximal bacterial cellulose synthesis. The chain is Cellulose synthase operon protein C (bscS) from Pseudomonas fluorescens (strain SBW25).